Here is a 392-residue protein sequence, read N- to C-terminus: 1-deoxy-D-xylulose 5-phosphate reductoisomerase (392 aa).

Positions 10, 11, 12, 13, and 124 each coordinate NADPH. 1-deoxy-D-xylulose 5-phosphate is bound at residue Lys125. Glu126 serves as a coordination point for NADPH. Asp150 lines the Mn(2+) pocket. Residues Ser151, Glu152, Ser180, and His203 each coordinate 1-deoxy-D-xylulose 5-phosphate. Glu152 lines the Mn(2+) pocket. Gly209 provides a ligand contact to NADPH. 1-deoxy-D-xylulose 5-phosphate-binding residues include Ser216, Asn221, Lys222, and Glu225. Residue Glu225 participates in Mn(2+) binding.

This sequence belongs to the DXR family. It depends on Mg(2+) as a cofactor. Requires Mn(2+) as cofactor.

The enzyme catalyses 2-C-methyl-D-erythritol 4-phosphate + NADP(+) = 1-deoxy-D-xylulose 5-phosphate + NADPH + H(+). Its pathway is isoprenoid biosynthesis; isopentenyl diphosphate biosynthesis via DXP pathway; isopentenyl diphosphate from 1-deoxy-D-xylulose 5-phosphate: step 1/6. In terms of biological role, catalyzes the NADPH-dependent rearrangement and reduction of 1-deoxy-D-xylulose-5-phosphate (DXP) to 2-C-methyl-D-erythritol 4-phosphate (MEP). The polypeptide is 1-deoxy-D-xylulose 5-phosphate reductoisomerase (Saccharophagus degradans (strain 2-40 / ATCC 43961 / DSM 17024)).